The following is a 204-amino-acid chain: Thiamine-phosphate synthase (204 aa).

Residues 32-36 (QLRMK) and Asp-64 each bind 4-amino-2-methyl-5-(diphosphooxymethyl)pyrimidine. Residues Asp-65 and Asp-84 each contribute to the Mg(2+) site. Thr-103 lines the 4-amino-2-methyl-5-(diphosphooxymethyl)pyrimidine pocket. 129–131 (TTT) contacts 2-[(2R,5Z)-2-carboxy-4-methylthiazol-5(2H)-ylidene]ethyl phosphate. Lys-132 contributes to the 4-amino-2-methyl-5-(diphosphooxymethyl)pyrimidine binding site. Gly-165 serves as a coordination point for 2-[(2R,5Z)-2-carboxy-4-methylthiazol-5(2H)-ylidene]ethyl phosphate.

Belongs to the thiamine-phosphate synthase family. Mg(2+) is required as a cofactor.

The enzyme catalyses 2-[(2R,5Z)-2-carboxy-4-methylthiazol-5(2H)-ylidene]ethyl phosphate + 4-amino-2-methyl-5-(diphosphooxymethyl)pyrimidine + 2 H(+) = thiamine phosphate + CO2 + diphosphate. The catalysed reaction is 2-(2-carboxy-4-methylthiazol-5-yl)ethyl phosphate + 4-amino-2-methyl-5-(diphosphooxymethyl)pyrimidine + 2 H(+) = thiamine phosphate + CO2 + diphosphate. It catalyses the reaction 4-methyl-5-(2-phosphooxyethyl)-thiazole + 4-amino-2-methyl-5-(diphosphooxymethyl)pyrimidine + H(+) = thiamine phosphate + diphosphate. It functions in the pathway cofactor biosynthesis; thiamine diphosphate biosynthesis; thiamine phosphate from 4-amino-2-methyl-5-diphosphomethylpyrimidine and 4-methyl-5-(2-phosphoethyl)-thiazole: step 1/1. Functionally, condenses 4-methyl-5-(beta-hydroxyethyl)thiazole monophosphate (THZ-P) and 2-methyl-4-amino-5-hydroxymethyl pyrimidine pyrophosphate (HMP-PP) to form thiamine monophosphate (TMP). In Bacteroides fragilis (strain ATCC 25285 / DSM 2151 / CCUG 4856 / JCM 11019 / LMG 10263 / NCTC 9343 / Onslow / VPI 2553 / EN-2), this protein is Thiamine-phosphate synthase.